The chain runs to 40 residues: Dihydrolipoyl dehydrogenase (40 aa).

36 to 40 (EKRGT) contributes to the FAD binding site.

Belongs to the class-I pyridine nucleotide-disulfide oxidoreductase family. In terms of assembly, homodimer. FAD is required as a cofactor.

The protein localises to the mitochondrion matrix. It catalyses the reaction N(6)-[(R)-dihydrolipoyl]-L-lysyl-[protein] + NAD(+) = N(6)-[(R)-lipoyl]-L-lysyl-[protein] + NADH + H(+). Functionally, lipoamide dehydrogenase is a component of the glycine cleavage system as well as of the alpha-ketoacid dehydrogenase complexes. The pyruvate dehydrogenase complex contains multiple copies of three enzymatic components: pyruvate dehydrogenase (E1), dihydrolipoamide acetyltransferase (E2) and lipoamide dehydrogenase (E3). The sequence is that of Dihydrolipoyl dehydrogenase from Solanum tuberosum (Potato).